The sequence spans 302 residues: Phosphoribosylaminoimidazole-succinocarboxamide synthase (302 aa).

This sequence belongs to the SAICAR synthetase family.

The enzyme catalyses 5-amino-1-(5-phospho-D-ribosyl)imidazole-4-carboxylate + L-aspartate + ATP = (2S)-2-[5-amino-1-(5-phospho-beta-D-ribosyl)imidazole-4-carboxamido]succinate + ADP + phosphate + 2 H(+). The protein operates within purine metabolism; IMP biosynthesis via de novo pathway; 5-amino-1-(5-phospho-D-ribosyl)imidazole-4-carboxamide from 5-amino-1-(5-phospho-D-ribosyl)imidazole-4-carboxylate: step 1/2. This Cupriavidus necator (strain ATCC 17699 / DSM 428 / KCTC 22496 / NCIMB 10442 / H16 / Stanier 337) (Ralstonia eutropha) protein is Phosphoribosylaminoimidazole-succinocarboxamide synthase.